A 304-amino-acid chain; its full sequence is Protease HtpX homolog 1 (304 aa).

The next 2 membrane-spanning stretches (helical) occupy residues 17 to 37 (VTLF…IALL) and 39 to 59 (SWVL…WFSD). Position 140 (His-140) interacts with Zn(2+). Glu-141 is an active-site residue. His-144 lines the Zn(2+) pocket. 2 helical membrane passes run 151-171 (AVIT…RFAF) and 186-206 (AVLA…FLLI). A Zn(2+)-binding site is contributed by Glu-214.

It belongs to the peptidase M48B family. Requires Zn(2+) as cofactor.

The protein localises to the cell membrane. In Streptomyces coelicolor (strain ATCC BAA-471 / A3(2) / M145), this protein is Protease HtpX homolog 1.